The chain runs to 304 residues: Small ribosomal subunit biogenesis GTPase RsgA (304 aa).

The region spanning 78–237 is the CP-type G domain; sequence HSFLTRPPVA…VADTPGFNRP (160 aa). GTP contacts are provided by residues 127–130 and 179–187; these read TKTD and GPSGVGKSS. Zn(2+) is bound by residues Cys262, Cys267, His269, and Cys275.

Belongs to the TRAFAC class YlqF/YawG GTPase family. RsgA subfamily. In terms of assembly, monomer. Associates with 30S ribosomal subunit, binds 16S rRNA. It depends on Zn(2+) as a cofactor.

Its subcellular location is the cytoplasm. Functionally, one of several proteins that assist in the late maturation steps of the functional core of the 30S ribosomal subunit. Helps release RbfA from mature subunits. May play a role in the assembly of ribosomal proteins into the subunit. Circularly permuted GTPase that catalyzes slow GTP hydrolysis, GTPase activity is stimulated by the 30S ribosomal subunit. The polypeptide is Small ribosomal subunit biogenesis GTPase RsgA (Synechococcus sp. (strain CC9605)).